The chain runs to 28 residues: Dermaseptin-1 (28 aa).

Gln-28 is modified (glutamine amide).

Expressed by the skin glands.

The protein localises to the secreted. In terms of biological role, has antimicrobial activity. This chain is Dermaseptin-1, found in Phyllomedusa tomopterna (Tiger-striped leaf frog).